Here is a 190-residue protein sequence, read N- to C-terminus: CASP-like protein 1U3 (190 aa).

The Cytoplasmic portion of the chain corresponds to 1–24; it reads MNGATVQPSYKEAGPVRYHPMHDC. Residues 25–45 form a helical membrane-spanning segment; it reads LSLILRLLTLGATIAAIVAML. Over 46–70 the chain is Extracellular; that stretch reads KSTQTVPTLLGPHTARWKDFPAFEW. A helical transmembrane segment spans residues 71–91; it reads FVIGNSIVLVYAALGTLAACL. Residues 92-113 are Cytoplasmic-facing; the sequence is SLFTRRGPLSYTKTAWLTFLCD. The chain crosses the membrane as a helical span at residues 114 to 134; the sequence is FICSCALISAGSTALGVAWIG. The Extracellular segment spans residues 135–158; the sequence is KHGQHSAFWNAVCPTVDRFCDYVQ. Residues 159–179 traverse the membrane as a helical segment; sequence GALIATLCGFIFQALSTVIAA. Over 180–190 the chain is Cytoplasmic; it reads SALHNLATHRH.

It belongs to the Casparian strip membrane proteins (CASP) family. In terms of assembly, homodimer and heterodimers.

The protein resides in the cell membrane. The protein is CASP-like protein 1U3 of Physcomitrium patens (Spreading-leaved earth moss).